A 267-amino-acid polypeptide reads, in one-letter code: Mannose-specific lectin 1 (267 aa).

The signal sequence occupies residues 1 to 26; sequence MAKLLLFLLPAILGLLVPPRSWSAVA. Bulb-type lectin domains lie at 29–134 and 148–255; these read TNYL…PSVP and NNLL…PQAK. Beta-D-mannose-binding positions include 54-58, Tyr62, Trp66, Gln67, 173-177, Tyr181, and 185-188; these read QDDCN, QGDCN, and YGWQ. A Carbohydrate-binding motif 1 motif is present at residues 54–62; it reads QDDCNLVLY. 2 disulfide bridges follow: Cys57–Cys77 and Cys176–Cys198. Positions 173–181 match the Carbohydrate-binding motif 2 motif; it reads QGDCNLVLY.

Forms heterotetramer of 2 chains 1 and 2 chains 2 arranged as a dimer of chain 1 and chain 2 heterodimers.

It is found in the secreted. Mannose-specific lectin. Shows agglutinating activity towards erythrocytes from rabbit. In Colocasia esculenta (Wild taro), this protein is Mannose-specific lectin 1.